We begin with the raw amino-acid sequence, 173 residues long: Cytochrome c-type biogenesis protein CcmE (173 aa).

Over 1–8 the chain is Cytoplasmic; the sequence is MNPRRKSR. Residues 9 to 29 form a helical; Signal-anchor for type II membrane protein membrane-spanning segment; it reads FKLVIFVVLGIAIASGLMLYA. At 30-173 the chain is on the periplasmic side; it reads LRQNIDLFYT…RDRQEKEGAK (144 aa). Positions 131 and 135 each coordinate heme. The interval 139–173 is disordered; the sequence is ELGEKMQKVHKPMGIKAADLKGESERDRQEKEGAK. Positions 156-173 are enriched in basic and acidic residues; it reads ADLKGESERDRQEKEGAK.

The protein belongs to the CcmE/CycJ family.

The protein localises to the cell inner membrane. In terms of biological role, heme chaperone required for the biogenesis of c-type cytochromes. Transiently binds heme delivered by CcmC and transfers the heme to apo-cytochromes in a process facilitated by CcmF and CcmH. This is Cytochrome c-type biogenesis protein CcmE from Haemophilus influenzae (strain 86-028NP).